The primary structure comprises 375 residues: Sulfite efflux pump SSU1 (375 aa).

The Cytoplasmic segment spans residues 1–25 (MPSGSGFHNIEEAGEKARKRDDWIA). A helical transmembrane segment spans residues 26 to 46 (ISNFHPGWFSVNMGTGITAIL). Residues 47-59 (LQNLPYQFPGLHY) are Extracellular-facing. The chain crosses the membrane as a helical span at residues 60–80 (IAVVLFILNVIIFFLFLTISI). Residues 81 to 101 (TRYCLWPDKFKAMLAHPAHSM) are Cytoplasmic-facing. A helical transmembrane segment spans residues 102–122 (LLGTFPMGFATIINCIVFICV). Residues 123–135 (PVWGEWASRFAWG) lie on the Extracellular side of the membrane. The chain crosses the membrane as a helical span at residues 136-156 (LWWIDAAVSVAICYFVPFMLM). The Cytoplasmic segment spans residues 157-167 (TKHTSSLETMT). A helical membrane pass occupies residues 168–188 (AAWLLPIVAPVVAAASGGVVA). Over 189–200 (DSLQNDTHALIT) the chain is Extracellular. N-linked (GlcNAc...) asparagine glycosylation occurs at Asn-193. A helical transmembrane segment spans residues 201 to 221 (ILVCYAMWGSAVPLAMVILVI). The Cytoplasmic segment spans residues 222–234 (YFQRLAIHKLVPR). A helical membrane pass occupies residues 235-255 (AAIVSALLPIGPLGQGGFGLM). The Extracellular segment spans residues 256–277 (QLGVVAKRVFPRLDFLAPIAGD). A helical membrane pass occupies residues 278-298 (IFYVMGAFIAMIMWGFGLIWL). Residues 299-309 (WFALASFTRGK) are Cytoplasmic-facing. The helical transmembrane segment at 310 to 330 (FYFNIGWWAFTFPLGVFTTAT) threads the bilayer. Residues 331–343 (TQMGKEFNSPFFD) are Extracellular-facing. Residues 344-364 (ILGTFFSIVVTCMWVLVFALT) form a helical membrane-spanning segment. Over 365 to 375 (VYKSCTKELFR) the chain is Cytoplasmic.

The protein belongs to the tellurite-resistance/dicarboxylate transporter (TDT) family.

The protein resides in the cell membrane. Its function is as follows. Sulphite efflux pump required for the secretion of sulphite as a reducing agent. In the presence of sulphite, cystine in keratin is directly cleaved to cysteine and S-sulphocysteine, and thereby, reduced proteins become accessible to hydrolysis by a variety of secreted endo- and exoproteases. Excretion of sulphite mediated by an efflux pump also represents a detoxification pathway for dermatophytes during infection of the epidermal stratum corneum, hair and nails, which are rich in cysteine. In Trichophyton rubrum (Athlete's foot fungus), this protein is Sulfite efflux pump SSU1 (SSU1).